The chain runs to 373 residues: P2Y purinoceptor 1 (373 aa).

At 1–51 (MTEVPWSVVPNGTDAAFLAGLGSLWGNSTVASTAAVSSSFQCALTKTGFQF) the chain is on the extracellular side. N-linked (GlcNAc...) asparagine glycans are attached at residues N11 and N27. 2 disulfide bridges follow: C42/C296 and C124/C202. ADP is bound at residue K46. The chain crosses the membrane as a helical span at residues 52–74 (YYLPAVYILVFIIGFLGNSVAIW). The Cytoplasmic portion of the chain corresponds to 75–87 (MFVFHMKPWSGIS). A helical transmembrane segment spans residues 88-109 (VYMFNLALADFLYVLTLPALIF). The Extracellular segment spans residues 110-125 (YYFNKTDWIFGDAMCK). N-linked (GlcNAc...) asparagine glycosylation is present at N113. The chain crosses the membrane as a helical span at residues 126–147 (LQRFIFHVNLYGSILFLTCISA). The Cytoplasmic portion of the chain corresponds to 148 to 166 (HRYSGVVYPLKSLGRLKKK). A helical membrane pass occupies residues 167-188 (NAIYVSVLVWLIVVVAISPILF). The Extracellular segment spans residues 189–214 (YSGTGTRKNKTVTCYDTTSNDYLRSY). An N-linked (GlcNAc...) asparagine glycan is attached at N197. An ADP-binding site is contributed by 203-205 (YDT). The chain crosses the membrane as a helical span at residues 215–237 (FIYSMCTTVAMFCIPLVLILGCY). Over 238–260 (GLIVKALIYNDLDNSPLRRKSIY) the chain is Cytoplasmic. A helical membrane pass occupies residues 261 to 284 (LVIIVLTVFAVSYIPFHVMKTMNL). ADP-binding positions include 283 to 287 (NLRAR), 303 to 306 (YATY), and R310. Topologically, residues 285-303 (RARLDFQTPEMCDFNDRVY) are extracellular. A helical membrane pass occupies residues 304-325 (ATYQVTRGLASLNSCVDPILYF). The Cytoplasmic segment spans residues 326–373 (LAGDTFRRRLSRATRKASRRSEANLQSKSEEMTLNILSEFKQNGDTSL).

The protein belongs to the G-protein coupled receptor 1 family.

The protein localises to the cell membrane. Its function is as follows. Receptor for extracellular adenine nucleotides such as ADP. In platelets, binding to ADP leads to mobilization of intracellular calcium ions via activation of phospholipase C, a change in platelet shape, and ultimately platelet aggregation. The sequence is that of P2Y purinoceptor 1 (P2ry1) from Mus musculus (Mouse).